Here is a 101-residue protein sequence, read N- to C-terminus: Urease subunit beta (101 aa).

This sequence belongs to the urease beta subunit family. In terms of assembly, heterotrimer of UreA (gamma), UreB (beta) and UreC (alpha) subunits. Three heterotrimers associate to form the active enzyme.

It localises to the cytoplasm. The enzyme catalyses urea + 2 H2O + H(+) = hydrogencarbonate + 2 NH4(+). Its pathway is nitrogen metabolism; urea degradation; CO(2) and NH(3) from urea (urease route): step 1/1. This chain is Urease subunit beta, found in Stutzerimonas stutzeri (strain A1501) (Pseudomonas stutzeri).